A 120-amino-acid chain; its full sequence is uncharacterized protein (120 aa).

Residues 1–27 (MPKIGVSLIVLIMLIIFLAGCNKNEQN) form the signal peptide.

This is an uncharacterized protein from Bacillus subtilis (strain 168).